We begin with the raw amino-acid sequence, 486 residues long: Membrane-bound lytic murein transglycosylase F (486 aa).

Positions Met-1–Ala-21 are cleaved as a signal peptide. Residues Leu-22 to Val-268 form a non-LT domain region. The segment at Gly-269 to Asp-486 is LT domain. Residue Glu-313 is part of the active site.

The protein in the N-terminal section; belongs to the bacterial solute-binding protein 3 family. This sequence in the C-terminal section; belongs to the transglycosylase Slt family.

It is found in the cell outer membrane. It catalyses the reaction Exolytic cleavage of the (1-&gt;4)-beta-glycosidic linkage between N-acetylmuramic acid (MurNAc) and N-acetylglucosamine (GlcNAc) residues in peptidoglycan, from either the reducing or the non-reducing ends of the peptidoglycan chains, with concomitant formation of a 1,6-anhydrobond in the MurNAc residue.. Its function is as follows. Murein-degrading enzyme that degrades murein glycan strands and insoluble, high-molecular weight murein sacculi, with the concomitant formation of a 1,6-anhydromuramoyl product. Lytic transglycosylases (LTs) play an integral role in the metabolism of the peptidoglycan (PG) sacculus. Their lytic action creates space within the PG sacculus to allow for its expansion as well as for the insertion of various structures such as secretion systems and flagella. The polypeptide is Membrane-bound lytic murein transglycosylase F (Yersinia pestis bv. Antiqua (strain Antiqua)).